We begin with the raw amino-acid sequence, 387 residues long: Pepsin II-2/3 (387 aa).

Residues 1 to 15 (MKWLLLLGLLALSEC) form the signal peptide. A propeptide spans 16 to 59 (IVHKVPLVRKKSLRKNLIEKGLLQDYLKTHTPNPATKYFPKETF) (activation peptide). A Peptidase A1 domain is found at 75–384 (YFGTISIGTP…DRANNQLGLA (310 aa)). Aspartate 93 is an active-site residue. Cysteine 106 and cysteine 111 are joined by a disulfide. Serine 129 is subject to Phosphoserine. Cysteines 267 and 271 form a disulfide. Aspartate 276 is an active-site residue. Cysteines 310 and 343 form a disulfide.

It belongs to the peptidase A1 family.

It localises to the secreted. It catalyses the reaction Preferential cleavage: hydrophobic, preferably aromatic, residues in P1 and P1' positions. Cleaves 1-Phe-|-Val-2, 4-Gln-|-His-5, 13-Glu-|-Ala-14, 14-Ala-|-Leu-15, 15-Leu-|-Tyr-16, 16-Tyr-|-Leu-17, 23-Gly-|-Phe-24, 24-Phe-|-Phe-25 and 25-Phe-|-Tyr-26 bonds in the B chain of insulin.. Functionally, shows particularly broad specificity; although bonds involving phenylalanine and leucine are preferred, many others are also cleaved to some extent. This chain is Pepsin II-2/3, found in Oryctolagus cuniculus (Rabbit).